A 128-amino-acid chain; its full sequence is CD59 glycoprotein (128 aa).

Positions 1-25 are cleaved as a signal peptide; it reads MGIQGGSVLFGLLLVLAVFCHSGHS. In terms of domain architecture, UPAR/Ly6 spans 26-108; it reads LQCYNCPNPT…QLENGGTSLS (83 aa). Disulfide bonds link Cys-28-Cys-51, Cys-31-Cys-38, and Cys-44-Cys-64. Asn-43 carries an N-linked (GlcNAc...) asparagine glycan. Lys-66 carries an N-linked (Glc) (glycation) lysine glycan. Intrachain disulfides connect Cys-70–Cys-88 and Cys-89–Cys-94. O-linked (GalNAc...) threonine glycans are attached at residues Thr-76 and Thr-77. Asn-102 carries the GPI-anchor amidated asparagine lipid modification. The propeptide at 103-128 is removed in mature form; that stretch reads GGTSLSEKTVLLLVTPFLAAAWSLHP.

Interacts with T-cell surface antigen CD2. Post-translationally, N- and O-glycosylated. The N-glycosylation mainly consists of a family of biantennary complex-type structures with and without lactosamine extensions and outer arm fucose residues. Also significant amounts of triantennary complexes (22%). Variable sialylation also present in the Asn-43 oligosaccharide. The predominant O-glycans are mono-sialylated forms of the disaccharide, Gal-beta-1,3GalNAc, and their sites of attachment are probably on Thr-76 and Thr-77. The GPI-anchor of soluble urinary CD59 has no inositol-associated phospholipid, but is composed of seven different GPI-anchor variants of one or more monosaccharide units. Major variants contain sialic acid, mannose and glucosamine. Sialic acid linked to an N-acetylhexosamine-galactose arm is present in two variants. Glycated. Glycation is found in diabetic subjects, but only at minimal levels in nondiabetic subjects. Glycated CD59 lacks MAC-inhibitory function and confers to vascular complications of diabetes.

It localises to the cell membrane. It is found in the secreted. Functionally, potent inhibitor of the complement membrane attack complex (MAC) action, which protects human cells from damage during complement activation. Acts by binding to the beta-haipins of C8 (C8A and C8B) components of the assembling MAC, forming an intermolecular beta-sheet that prevents incorporation of the multiple copies of C9 required for complete formation of the osmolytic pore. Its function is as follows. The soluble form from urine retains its specific complement binding activity, but exhibits greatly reduced ability to inhibit complement membrane attack complex (MAC) assembly on cell membranes. The chain is CD59 glycoprotein from Homo sapiens (Human).